A 447-amino-acid polypeptide reads, in one-letter code: Probable glycine dehydrogenase (decarboxylating) subunit 1 (447 aa).

Belongs to the GcvP family. N-terminal subunit subfamily. The glycine cleavage system is composed of four proteins: P, T, L and H. In this organism, the P 'protein' is a heterodimer of two subunits.

The enzyme catalyses N(6)-[(R)-lipoyl]-L-lysyl-[glycine-cleavage complex H protein] + glycine + H(+) = N(6)-[(R)-S(8)-aminomethyldihydrolipoyl]-L-lysyl-[glycine-cleavage complex H protein] + CO2. The glycine cleavage system catalyzes the degradation of glycine. The P protein binds the alpha-amino group of glycine through its pyridoxal phosphate cofactor; CO(2) is released and the remaining methylamine moiety is then transferred to the lipoamide cofactor of the H protein. This chain is Probable glycine dehydrogenase (decarboxylating) subunit 1, found in Bacillus cereus (strain AH187).